The following is a 178-amino-acid chain: Large ribosomal subunit protein uL6 (178 aa).

Belongs to the universal ribosomal protein uL6 family. In terms of assembly, part of the 50S ribosomal subunit.

Its function is as follows. This protein binds to the 23S rRNA, and is important in its secondary structure. It is located near the subunit interface in the base of the L7/L12 stalk, and near the tRNA binding site of the peptidyltransferase center. This is Large ribosomal subunit protein uL6 from Streptococcus suis (strain 05ZYH33).